The chain runs to 1704 residues: Nonribosomal peptide synthetase ivoA (1704 aa).

The tract at residues 234–620 (EEQAIARPDQ…HGRKDLEVKI (387 aa)) is adenylation. A Carrier domain is found at 748 to 827 (NLISDPSDSM…EMATKTSAVE (80 aa)). Serine 785 carries the post-translational modification O-(pantetheine 4'-phosphoryl)serine. The tract at residues 840–1266 (FPLSPVQQMY…QELLETAVER (427 aa)) is epimerization (E) domain. The tract at residues 1325-1477 (VQGDWTIEKT…AQSSTPSARK (153 aa)) is condensation.

The protein belongs to the NRP synthetase family.

It catalyses the reaction L-tryptophan + ATP + H2O = D-tryptophan + AMP + diphosphate + H(+). It participates in pigment biosynthesis. Nonribosomal peptide synthetase; part of the pathway that mediates the biosynthesis of the gray-brown conidiophore pigment. The first step of the pathway is performed by the nonribosomal peptide synthetase ivoA that catalyzes ATP-dependent unidirectional stereoinversion of L-tryptophan to D-tryptophan with complete conversion. While the stereoinversion is catalyzed by the epimerization (E) domain of ivoA, the terminal condensation (C) domain stereoselectively hydrolyzes D-tryptophanyl-S-phosphopantetheine thioester and thus represents a non-canonical C domain function. D-tryptophan is acetylated, probably by an endogenous acetyltransferase. N-acetyltryptophan is further 6-hydroxylated into N-acetyl-6-hydroxytryptophan (AHT) by the cytochrome P450 monooxygenase ivoC. N-acetyl-6-hydroxytryptophan is substrate of the N-acetyl-6-hydroxytryptophan oxidase ivoB to produce the gray-brown conidiophore pigment. This chain is Nonribosomal peptide synthetase ivoA, found in Emericella nidulans (strain FGSC A4 / ATCC 38163 / CBS 112.46 / NRRL 194 / M139) (Aspergillus nidulans).